Here is a 229-residue protein sequence, read N- to C-terminus: Potassium/proton antiporter CemA (229 aa).

3 helical membrane-spanning segments follow: residues 7–27 (FTPLLYLASLVFLPWWISLSF), 114–134 (IICFVILSGYSIWGNEELVIL), and 189–209 (ILSGLVSTFPVILDTLFKFWI).

Belongs to the CemA family.

Its subcellular location is the plastid. The protein localises to the chloroplast inner membrane. It catalyses the reaction K(+)(in) + H(+)(out) = K(+)(out) + H(+)(in). Contributes to K(+)/H(+) antiport activity by supporting proton efflux to control proton extrusion and homeostasis in chloroplasts in a light-dependent manner to modulate photosynthesis. Prevents excessive induction of non-photochemical quenching (NPQ) under continuous-light conditions. Indirectly promotes efficient inorganic carbon uptake into chloroplasts. This is Potassium/proton antiporter CemA from Panax ginseng (Korean ginseng).